The primary structure comprises 264 residues: Thymidylate synthase (264 aa).

DUMP-binding positions include Arg-21 and 126–127 (RR). Catalysis depends on Cys-146, which acts as the Nucleophile. Residues 166–169 (RSAD), Asn-177, and 207–209 (HLY) contribute to the dUMP site. Position 169 (Asp-169) interacts with (6R)-5,10-methylene-5,6,7,8-tetrahydrofolate. Ala-263 lines the (6R)-5,10-methylene-5,6,7,8-tetrahydrofolate pocket.

The protein belongs to the thymidylate synthase family. Bacterial-type ThyA subfamily. Homodimer.

It localises to the cytoplasm. It catalyses the reaction dUMP + (6R)-5,10-methylene-5,6,7,8-tetrahydrofolate = 7,8-dihydrofolate + dTMP. Its pathway is pyrimidine metabolism; dTTP biosynthesis. Its function is as follows. Catalyzes the reductive methylation of 2'-deoxyuridine-5'-monophosphate (dUMP) to 2'-deoxythymidine-5'-monophosphate (dTMP) while utilizing 5,10-methylenetetrahydrofolate (mTHF) as the methyl donor and reductant in the reaction, yielding dihydrofolate (DHF) as a by-product. This enzymatic reaction provides an intracellular de novo source of dTMP, an essential precursor for DNA biosynthesis. The sequence is that of Thymidylate synthase from Rhodopseudomonas palustris (strain BisB5).